A 140-amino-acid chain; its full sequence is Large ribosomal subunit protein uL11 (140 aa).

It belongs to the universal ribosomal protein uL11 family. Part of the ribosomal stalk of the 50S ribosomal subunit. Interacts with L10 and the large rRNA to form the base of the stalk. L10 forms an elongated spine to which L12 dimers bind in a sequential fashion forming a multimeric L10(L12)X complex. One or more lysine residues are methylated.

Functionally, forms part of the ribosomal stalk which helps the ribosome interact with GTP-bound translation factors. In Thermoanaerobacter pseudethanolicus (strain ATCC 33223 / 39E) (Clostridium thermohydrosulfuricum), this protein is Large ribosomal subunit protein uL11.